The primary structure comprises 415 residues: Interleukin-5 receptor subunit alpha (415 aa).

The first 17 residues, 1-17 (MVPVLLILVGALATLQA), serve as a signal peptide directing secretion. Residues 18–339 (DLLNHKKFLL…KERKSLVEWH (322 aa)) lie on the Extracellular side of the membrane. The Fibronectin type-III 1 domain occupies 29–120 (PPVNFTIKAT…VSAELKAPPG (92 aa)). Asn32 and Asn128 each carry an N-linked (GlcNAc...) asparagine glycan. Intrachain disulfides connect Cys131/Cys152 and Cys179/Cys193. N-linked (GlcNAc...) asparagine glycans are attached at residues Asn213 and Asn241. The Fibronectin type-III 2 domain occupies 238–331 (PPRNVTVEIE…WSQPIYVGKE (94 aa)). A disulfide bridge links Cys266 with Cys313. The WSXWS motif signature appears at 319 to 323 (WGEWS). A helical transmembrane segment spans residues 340–361 (LIVLPTAACFVLLIFSLICRVC). At 362-415 (HLWTRLFPPVPAPKSNIKDLPVVTEYEKPSNETKIEVVHCVEEVGFEVMGNSTF) the chain is on the cytoplasmic side. Positions 367-375 (LFPPVPAPK) match the Box 1 motif motif.

As to quaternary structure, interacts with IL5. Interacts with CSF2RB. Interacts with JAK2. Interacts with SDCBP. In terms of tissue distribution, expressed on eosinophils and basophils. Also on B-cells.

It localises to the membrane. Its function is as follows. Cell surface receptor that plays an important role in the survival, differentiation, and chemotaxis of eosinophils. Acts by forming a heterodimeric receptor with CSF2RB subunit and subsequently binding to interleukin-5. In unstimulated conditions, interacts constitutively with JAK2. Heterodimeric receptor activation leads to JAK2 stimulation and subsequent activation of the JAK-STAT pathway. The chain is Interleukin-5 receptor subunit alpha (Il5ra) from Mus musculus (Mouse).